Here is a 370-residue protein sequence, read N- to C-terminus: Phosphoribosylformylglycinamidine cyclo-ligase (370 aa).

The protein belongs to the AIR synthase family.

The protein localises to the cytoplasm. It catalyses the reaction 2-formamido-N(1)-(5-O-phospho-beta-D-ribosyl)acetamidine + ATP = 5-amino-1-(5-phospho-beta-D-ribosyl)imidazole + ADP + phosphate + H(+). It functions in the pathway purine metabolism; IMP biosynthesis via de novo pathway; 5-amino-1-(5-phospho-D-ribosyl)imidazole from N(2)-formyl-N(1)-(5-phospho-D-ribosyl)glycinamide: step 2/2. The polypeptide is Phosphoribosylformylglycinamidine cyclo-ligase (Rhodospirillum rubrum (strain ATCC 11170 / ATH 1.1.1 / DSM 467 / LMG 4362 / NCIMB 8255 / S1)).